Reading from the N-terminus, the 286-residue chain is MIDQLKIIGQYLLPKKLLSRLLGKLAAAEAGKLTTFLIKKFINKFNVDMSEAKYSDPEYFKTFNDFFTRELKPEARQIIAGEDNLAHPVDGAVSQMGDIKEGRLFQAKGHDFSLRELLGGRDDVAAPFDKGLFSTIYLAPKDYHRIHMPITGKLEQMIFIPGDLFSVNPLTAQNVPNLFARNERAVAIFSTAVGPVAMVLVGATIVASIETVWAGTLTANADKEIQYWDYKNQDITLEKGAEMGRFKLGSTVVALFPKESIHFAENLQAGSVTRLGELFASKVEHK.

Catalysis depends on charge relay system; for autoendoproteolytic cleavage activity residues Asp-90, His-147, and Ser-250. Ser-250 (schiff-base intermediate with substrate; via pyruvic acid; for decarboxylase activity) is an active-site residue. Ser-250 bears the Pyruvic acid (Ser); by autocatalysis mark.

The protein belongs to the phosphatidylserine decarboxylase family. PSD-B subfamily. Prokaryotic type I sub-subfamily. As to quaternary structure, heterodimer of a large membrane-associated beta subunit and a small pyruvoyl-containing alpha subunit. Requires pyruvate as cofactor. In terms of processing, is synthesized initially as an inactive proenzyme. Formation of the active enzyme involves a self-maturation process in which the active site pyruvoyl group is generated from an internal serine residue via an autocatalytic post-translational modification. Two non-identical subunits are generated from the proenzyme in this reaction, and the pyruvate is formed at the N-terminus of the alpha chain, which is derived from the carboxyl end of the proenzyme. The autoendoproteolytic cleavage occurs by a canonical serine protease mechanism, in which the side chain hydroxyl group of the serine supplies its oxygen atom to form the C-terminus of the beta chain, while the remainder of the serine residue undergoes an oxidative deamination to produce ammonia and the pyruvoyl prosthetic group on the alpha chain. During this reaction, the Ser that is part of the protease active site of the proenzyme becomes the pyruvoyl prosthetic group, which constitutes an essential element of the active site of the mature decarboxylase.

The protein resides in the cell membrane. It carries out the reaction a 1,2-diacyl-sn-glycero-3-phospho-L-serine + H(+) = a 1,2-diacyl-sn-glycero-3-phosphoethanolamine + CO2. It participates in phospholipid metabolism; phosphatidylethanolamine biosynthesis; phosphatidylethanolamine from CDP-diacylglycerol: step 2/2. In terms of biological role, catalyzes the formation of phosphatidylethanolamine (PtdEtn) from phosphatidylserine (PtdSer). The protein is Phosphatidylserine decarboxylase proenzyme of Psychromonas ingrahamii (strain DSM 17664 / CCUG 51855 / 37).